The primary structure comprises 167 residues: V-type proton ATPase subunit c' (167 aa).

Topologically, residues 1–13 (MAEIMADSELAPK) are lumenal. Residues 14 to 34 (FAPFIGMAGIAAAMIFGSAGA) form a helical membrane-spanning segment. The Cytoplasmic segment spans residues 35–59 (AYGTAKSGIGIAGVGTFRPDLIMKC). Residues 60-80 (LIPVVMSGIIAVYALVVAVLI) traverse the membrane as a helical segment. The Lumenal segment spans residues 81–101 (AQDLGPPGSGQHYSLFNGFMH). A helical transmembrane segment spans residues 102–122 (LACGLSVGLTGLAAGYCIGIV). The Cytoplasmic segment spans residues 123–140 (GDKGVRSFMLQSRIFVGM). The helical transmembrane segment at 141–161 (VLILIFGEVLGLYGLIVALIL) threads the bilayer. Residues 162–167 (NTKSKG) lie on the Lumenal side of the membrane.

The protein belongs to the V-ATPase proteolipid subunit family. V-ATPase is a heteromultimeric enzyme composed of a peripheral catalytic V1 complex (components A to H) attached to an integral membrane V0 proton pore complex (components: a, c, c', c'', d, e, f and VOA1). The decameric c-ring forms the proton-conducting pore, and is composed of eight proteolipid subunits c, one subunit c' and one subunit c''.

It localises to the vacuole membrane. Proton-conducting pore forming subunit of the V0 complex of vacuolar(H+)-ATPase (V-ATPase), a multisubunit enzyme composed of a peripheral complex (V1) that hydrolyzes ATP and a membrane integral complex (V0) that translocates protons. V-ATPase is responsible for acidifying and maintaining the pH of intracellular compartments. In Neurospora crassa (strain ATCC 24698 / 74-OR23-1A / CBS 708.71 / DSM 1257 / FGSC 987), this protein is V-type proton ATPase subunit c' (vma-11).